The chain runs to 321 residues: Lipoyl synthase (321 aa).

The [4Fe-4S] cluster site is built by Cys-60, Cys-65, Cys-71, Cys-86, Cys-90, Cys-93, and Ser-299. A Radical SAM core domain is found at 72–288; the sequence is WEKKHATFMI…ETIGRTKGFL (217 aa).

The protein belongs to the radical SAM superfamily. Lipoyl synthase family. It depends on [4Fe-4S] cluster as a cofactor.

The protein localises to the cytoplasm. It carries out the reaction [[Fe-S] cluster scaffold protein carrying a second [4Fe-4S](2+) cluster] + N(6)-octanoyl-L-lysyl-[protein] + 2 oxidized [2Fe-2S]-[ferredoxin] + 2 S-adenosyl-L-methionine + 4 H(+) = [[Fe-S] cluster scaffold protein] + N(6)-[(R)-dihydrolipoyl]-L-lysyl-[protein] + 4 Fe(3+) + 2 hydrogen sulfide + 2 5'-deoxyadenosine + 2 L-methionine + 2 reduced [2Fe-2S]-[ferredoxin]. Its pathway is protein modification; protein lipoylation via endogenous pathway; protein N(6)-(lipoyl)lysine from octanoyl-[acyl-carrier-protein]: step 2/2. Functionally, catalyzes the radical-mediated insertion of two sulfur atoms into the C-6 and C-8 positions of the octanoyl moiety bound to the lipoyl domains of lipoate-dependent enzymes, thereby converting the octanoylated domains into lipoylated derivatives. This chain is Lipoyl synthase, found in Brucella anthropi (strain ATCC 49188 / DSM 6882 / CCUG 24695 / JCM 21032 / LMG 3331 / NBRC 15819 / NCTC 12168 / Alc 37) (Ochrobactrum anthropi).